The primary structure comprises 634 residues: Protection of telomeres protein 1 (634 aa).

DNA-binding regions lie at residues 33–48 and 270–273; these read KPPY…SVVT and SYGR.

The protein belongs to the telombin family. Homodimer or homooligomer. Component of the shelterin complex (telosome) composed of TERF1, TERF2, TINF2, TERF2IP, ACD and POT1. Binds single-stranded telomeric DNA as a monomer. Associated component of the telomerase holoenzyme complex. Found in a complex with TERF1, TINF2 and TNKS1. Interacts with TNKS1. Forms heterodimers with ACD. Identified in a complex with ACD and single-stranded telomeric DNA. As to expression, ubiquitous.

It localises to the nucleus. It is found in the chromosome. Its subcellular location is the telomere. Functionally, component of the telomerase ribonucleoprotein (RNP) complex that is essential for the replication of chromosome termini. Is a component of the double-stranded telomeric DNA-binding TRF1 complex which is involved in the regulation of telomere length by cis-inhibition of telomerase. Also acts as a single-stranded telomeric DNA-binding protein and thus may act as a downstream effector of the TRF1 complex and may transduce information about telomere maintenance and/or length to the telomere terminus. Component of the shelterin complex (telosome) that is involved in the regulation of telomere length and protection. Shelterin associates with arrays of double-stranded TTAGGG repeats added by telomerase and protects chromosome ends; without its protective activity, telomeres are no longer hidden from the DNA damage surveillance and chromosome ends are inappropriately processed by DNA repair pathways. Binds to two or more telomeric single-stranded 5'-TTAGGG-3' repeats (G-strand) and with high specificity to a minimal telomeric single-stranded 5'-TAGGGTTAG-3' sequence. Binds telomeric single-stranded sequences internally or at proximity of a 3'-end. Its activity is TERT dependent but it does not increase TERT activity by itself. In contrast, the ACD-POT1 heterodimer enhances telomere elongation by increasing telomerase processivity. The sequence is that of Protection of telomeres protein 1 (POT1) from Homo sapiens (Human).